The primary structure comprises 325 residues: Glyoxylate/hydroxypyruvate reductase B (325 aa).

Active-site residues include R237 and E266. Residue H285 is the Proton donor of the active site.

The protein belongs to the D-isomer specific 2-hydroxyacid dehydrogenase family. GhrB subfamily. Homodimer.

It is found in the cytoplasm. It catalyses the reaction glycolate + NADP(+) = glyoxylate + NADPH + H(+). The catalysed reaction is (R)-glycerate + NAD(+) = 3-hydroxypyruvate + NADH + H(+). It carries out the reaction (R)-glycerate + NADP(+) = 3-hydroxypyruvate + NADPH + H(+). In terms of biological role, catalyzes the NADPH-dependent reduction of glyoxylate and hydroxypyruvate into glycolate and glycerate, respectively. The polypeptide is Glyoxylate/hydroxypyruvate reductase B (Serratia proteamaculans (strain 568)).